The primary structure comprises 479 residues: Ammonium transporter Rh type C (479 aa).

Over 1–9 (MAWNTNLRW) the chain is Cytoplasmic. The helical transmembrane segment at 10–30 (RLPLTCLLLQVAMVILFGVFV) threads the bilayer. Residues 31 to 60 (RYDFDADAHWWTERKHKNLSEVENEFYYRY) lie on the Extracellular side of the membrane. A glycan (N-linked (GlcNAc...) asparagine) is linked at asparagine 48. A helical membrane pass occupies residues 61–81 (PSFQDVHVMVFVGFGFLMTFL). Over 82–85 (QRYG) the chain is Cytoplasmic. A helical transmembrane segment spans residues 86 to 106 (FSAVGFNFLLAAFGIQWALLM). The Extracellular segment spans residues 107 to 123 (QGWFHFLEGRYIVVGVE). Residues 124–144 (NLINADFCVASVCVAFGAVLG) traverse the membrane as a helical segment. Residues 145-148 (KVSP) lie on the Cytoplasmic side of the membrane. The chain crosses the membrane as a helical span at residues 149–169 (IQLLIMTFFQVTLFAVNEFIL). Topologically, residues 170–177 (LNLLKVKD) are extracellular. A helical membrane pass occupies residues 178–200 (AGGSMTIHTFYAYFELTVTRILY). At 201-218 (RRNLEQSKERQSSAYQSD) the chain is on the cytoplasmic side. Residues 219 to 239 (LFAMIGTLFLWMYWPSFNSAI) traverse the membrane as a helical segment. Residues 240 to 250 (SYHGDSQHRAA) lie on the Extracellular side of the membrane. The chain crosses the membrane as a helical span at residues 251–271 (INTYCSLAACVLTSVAVSSAL). Over 272–281 (HKKGKLDMVH) the chain is Cytoplasmic. Residues 282–302 (IQNATLAGGVAVGTTAEMMLM) form a helical membrane-spanning segment. Proline 303 is a topological domain (extracellular). Residues 304–324 (YGALIIGFICGIISTLGFVYL) form a helical membrane-spanning segment. At 325–345 (TPFLESRLHIQDTCGINNLHG) the chain is on the cytoplasmic side. A helical membrane pass occupies residues 346 to 366 (IPGIIGGIVGAVTAASASLEV). Residues 367-394 (YGKEGLVHSFDFQDFKRDWTARTQGKFQ) lie on the Extracellular side of the membrane. Residues 395-415 (IYGLLVTLAMALMGGIIVGLI) form a helical membrane-spanning segment. Topologically, residues 416 to 479 (LRLPFWGQPS…PMASSVPLVP (64 aa)) are cytoplasmic.

It belongs to the ammonium transporter (TC 2.A.49) family. Rh subfamily. Homotrimer. N-glycosylated.

It localises to the apical cell membrane. The catalysed reaction is NH4(+)(in) = NH4(+)(out). It carries out the reaction methylamine(out) = methylamine(in). It catalyses the reaction CO2(out) = CO2(in). In terms of biological role, ammonium transporter involved in the maintenance of acid-base homeostasis. Transports ammonium and its related derivative methylammonium across the plasma membrane of epithelial cells likely contributing to renal transepithelial ammonia transport and ammonia metabolism. Postulated to primarily mediate an electroneutral bidirectional transport of NH3 ammonia species according to a mechanism that implies interaction of an NH4(+) ion with acidic residues of the pore entry followed by dissociation of NH4(+) into NH3 and H(+). As a result NH3 transits through the central pore and is protonated on the extracellular side reforming NH4(+). May act as a CO2 channel providing for renal acid secretion. The polypeptide is Ammonium transporter Rh type C (RHCG) (Macaca mulatta (Rhesus macaque)).